We begin with the raw amino-acid sequence, 291 residues long: Maintenance of mitochondrial morphology protein 1 (291 aa).

Residues Met1 to Gly16 lie on the Lumenal side of the membrane. Residues Leu17 to Leu37 traverse the membrane as a helical segment. At Asp38–Ser291 the chain is on the cytoplasmic side. Residues Asn73–Val277 form the SMP-LTD domain.

The protein belongs to the MMM1 family. Homodimer. Component of the ER-mitochondria encounter structure (ERMES) or MDM complex, composed of MMM1, MDM10, MDM12 and MDM34. An MMM1 homodimer associates with one molecule of MDM12 on each side in a pairwise head-to-tail manner, and the SMP-LTD domains of MMM1 and MDM12 generate a continuous hydrophobic tunnel for phospholipid trafficking.

It is found in the endoplasmic reticulum membrane. In terms of biological role, component of the ERMES/MDM complex, which serves as a molecular tether to connect the endoplasmic reticulum (ER) and mitochondria. Components of this complex are involved in the control of mitochondrial shape and protein biogenesis, and function in nonvesicular lipid trafficking between the ER and mitochondria. The MDM12-MMM1 subcomplex functions in the major beta-barrel assembly pathway that is responsible for biogenesis of all outer membrane beta-barrel proteins, and acts in a late step after the SAM complex. The MDM10-MDM12-MMM1 subcomplex further acts in the TOM40-specific pathway after the action of the MDM12-MMM1 complex. Essential for establishing and maintaining the structure of mitochondria and maintenance of mtDNA nucleoids. This is Maintenance of mitochondrial morphology protein 1 from Laccaria bicolor (strain S238N-H82 / ATCC MYA-4686) (Bicoloured deceiver).